The primary structure comprises 206 residues: Octanoyltransferase (206 aa).

The region spanning 30–206 (PETNDEIWLV…EFVTLLNNSI (177 aa)) is the BPL/LPL catalytic domain. Substrate-binding positions include 69–76 (RGGQVTYH), 137–139 (SLG), and 150–152 (GIA). The Acyl-thioester intermediate role is filled by Cys168.

It belongs to the LipB family.

The protein resides in the cytoplasm. It carries out the reaction octanoyl-[ACP] + L-lysyl-[protein] = N(6)-octanoyl-L-lysyl-[protein] + holo-[ACP] + H(+). It participates in protein modification; protein lipoylation via endogenous pathway; protein N(6)-(lipoyl)lysine from octanoyl-[acyl-carrier-protein]: step 1/2. Its function is as follows. Catalyzes the transfer of endogenously produced octanoic acid from octanoyl-acyl-carrier-protein onto the lipoyl domains of lipoate-dependent enzymes. Lipoyl-ACP can also act as a substrate although octanoyl-ACP is likely to be the physiological substrate. In Francisella tularensis subsp. tularensis (strain FSC 198), this protein is Octanoyltransferase.